Consider the following 143-residue polypeptide: Large ribosomal subunit protein uL13 (143 aa).

This sequence belongs to the universal ribosomal protein uL13 family. Part of the 50S ribosomal subunit.

Functionally, this protein is one of the early assembly proteins of the 50S ribosomal subunit, although it is not seen to bind rRNA by itself. It is important during the early stages of 50S assembly. The protein is Large ribosomal subunit protein uL13 of Solibacter usitatus (strain Ellin6076).